A 183-amino-acid chain; its full sequence is Large ribosomal subunit protein uL5 (183 aa).

The protein belongs to the universal ribosomal protein uL5 family. Part of the 50S ribosomal subunit; part of the 5S rRNA/L5/L18/L25 subcomplex. Contacts the 5S rRNA and the P site tRNA. Forms a bridge to the 30S subunit in the 70S ribosome.

This is one of the proteins that bind and probably mediate the attachment of the 5S RNA into the large ribosomal subunit, where it forms part of the central protuberance. In the 70S ribosome it contacts protein S13 of the 30S subunit (bridge B1b), connecting the 2 subunits; this bridge is implicated in subunit movement. Contacts the P site tRNA; the 5S rRNA and some of its associated proteins might help stabilize positioning of ribosome-bound tRNAs. In Legionella pneumophila (strain Lens), this protein is Large ribosomal subunit protein uL5.